The primary structure comprises 119 residues: MVRVKRGNVARKRRKKILKLAKGFRGSHSKLFTAANQQVMKALRNAYRHRRTKKRDFRSLWIVRINAQARTEGLSYSRLIDGLHKADVALNRKMLAQLAVTDPEAFAEVARVAKSARPV.

This sequence belongs to the bacterial ribosomal protein bL20 family.

In terms of biological role, binds directly to 23S ribosomal RNA and is necessary for the in vitro assembly process of the 50S ribosomal subunit. It is not involved in the protein synthesizing functions of that subunit. This is Large ribosomal subunit protein bL20 from Gloeobacter violaceus (strain ATCC 29082 / PCC 7421).